The sequence spans 286 residues: uncharacterized protein (286 aa).

An Integrase catalytic domain is found at 1-146 (MSRYKKDNDG…KPVDVERGDF (146 aa)). Positions 252-263 (RKVKAKKGKKDK) are enriched in basic residues. The interval 252-286 (RKVKAKKGKKDKKLKESKKSDDTSTGASTGSSIAM) is disordered. Residues 264-273 (KLKESKKSDD) show a composition bias toward basic and acidic residues. Over residues 274 to 286 (TSTGASTGSSIAM) the composition is skewed to low complexity.

This is an uncharacterized protein from Caenorhabditis elegans.